The primary structure comprises 400 residues: Acetate kinase (400 aa).

N10 lines the Mg(2+) pocket. Residue K17 participates in ATP binding. R91 contacts substrate. D150 (proton donor/acceptor) is an active-site residue. ATP-binding positions include 210 to 214 (HLGNG), 285 to 287 (DCR), and 333 to 337 (GIGEN). A Mg(2+)-binding site is contributed by E387.

Belongs to the acetokinase family. In terms of assembly, homodimer. Requires Mg(2+) as cofactor. The cofactor is Mn(2+).

The protein resides in the cytoplasm. It catalyses the reaction acetate + ATP = acetyl phosphate + ADP. It functions in the pathway metabolic intermediate biosynthesis; acetyl-CoA biosynthesis; acetyl-CoA from acetate: step 1/2. Functionally, catalyzes the formation of acetyl phosphate from acetate and ATP. Can also catalyze the reverse reaction. This chain is Acetate kinase, found in Proteus mirabilis (strain HI4320).